Consider the following 272-residue polypeptide: Bis(5'-nucleosyl)-tetraphosphatase, symmetrical (272 aa).

The protein belongs to the Ap4A hydrolase family.

It carries out the reaction P(1),P(4)-bis(5'-adenosyl) tetraphosphate + H2O = 2 ADP + 2 H(+). Functionally, hydrolyzes diadenosine 5',5'''-P1,P4-tetraphosphate to yield ADP. This Glaesserella parasuis serovar 5 (strain SH0165) (Haemophilus parasuis) protein is Bis(5'-nucleosyl)-tetraphosphatase, symmetrical.